Consider the following 61-residue polypeptide: Large ribosomal subunit protein eL37 (61 aa).

Cys-18, Cys-21, Cys-33, and Cys-36 together coordinate Zn(2+). A C4-type zinc finger spans residues 18-36; that stretch reads CRRCGRNAYNPTKKYCASC.

This sequence belongs to the eukaryotic ribosomal protein eL37 family. It depends on Zn(2+) as a cofactor.

In terms of biological role, binds to the 23S rRNA. In Methanosphaera stadtmanae (strain ATCC 43021 / DSM 3091 / JCM 11832 / MCB-3), this protein is Large ribosomal subunit protein eL37.